We begin with the raw amino-acid sequence, 128 residues long: Aspartate 1-decarboxylase (128 aa).

Ser25 (schiff-base intermediate with substrate; via pyruvic acid) is an active-site residue. Residue Ser25 is modified to Pyruvic acid (Ser). Position 57 (Thr57) interacts with substrate. Residue Tyr58 is the Proton donor of the active site. 73–75 (GAA) serves as a coordination point for substrate.

The protein belongs to the PanD family. In terms of assembly, heterooctamer of four alpha and four beta subunits. It depends on pyruvate as a cofactor. In terms of processing, is synthesized initially as an inactive proenzyme, which is activated by self-cleavage at a specific serine bond to produce a beta-subunit with a hydroxyl group at its C-terminus and an alpha-subunit with a pyruvoyl group at its N-terminus.

The protein localises to the cytoplasm. It catalyses the reaction L-aspartate + H(+) = beta-alanine + CO2. Its pathway is cofactor biosynthesis; (R)-pantothenate biosynthesis; beta-alanine from L-aspartate: step 1/1. In terms of biological role, catalyzes the pyruvoyl-dependent decarboxylation of aspartate to produce beta-alanine. The chain is Aspartate 1-decarboxylase from Moorella thermoacetica (strain ATCC 39073 / JCM 9320).